We begin with the raw amino-acid sequence, 467 residues long: UDP-N-acetylmuramate--L-alanine ligase (467 aa).

112 to 118 is an ATP binding site; it reads GTHGKTT.

It belongs to the MurCDEF family.

It localises to the cytoplasm. It catalyses the reaction UDP-N-acetyl-alpha-D-muramate + L-alanine + ATP = UDP-N-acetyl-alpha-D-muramoyl-L-alanine + ADP + phosphate + H(+). Its pathway is cell wall biogenesis; peptidoglycan biosynthesis. Functionally, cell wall formation. This chain is UDP-N-acetylmuramate--L-alanine ligase, found in Paraburkholderia xenovorans (strain LB400).